The chain runs to 167 residues: Large ribosomal subunit protein uL10 (167 aa).

Belongs to the universal ribosomal protein uL10 family. In terms of assembly, part of the ribosomal stalk of the 50S ribosomal subunit. The N-terminus interacts with L11 and the large rRNA to form the base of the stalk. The C-terminus forms an elongated spine to which L12 dimers bind in a sequential fashion forming a multimeric L10(L12)X complex.

In terms of biological role, forms part of the ribosomal stalk, playing a central role in the interaction of the ribosome with GTP-bound translation factors. This Chromohalobacter salexigens (strain ATCC BAA-138 / DSM 3043 / CIP 106854 / NCIMB 13768 / 1H11) protein is Large ribosomal subunit protein uL10.